We begin with the raw amino-acid sequence, 513 residues long: ATP synthase subunit alpha (513 aa).

171-178 contacts ATP; that stretch reads GDRQIGKT.

It belongs to the ATPase alpha/beta chains family. F-type ATPases have 2 components, CF(1) - the catalytic core - and CF(0) - the membrane proton channel. CF(1) has five subunits: alpha(3), beta(3), gamma(1), delta(1), epsilon(1). CF(0) has three main subunits: a(1), b(2) and c(9-12). The alpha and beta chains form an alternating ring which encloses part of the gamma chain. CF(1) is attached to CF(0) by a central stalk formed by the gamma and epsilon chains, while a peripheral stalk is formed by the delta and b chains.

It is found in the cell inner membrane. It catalyses the reaction ATP + H2O + 4 H(+)(in) = ADP + phosphate + 5 H(+)(out). Functionally, produces ATP from ADP in the presence of a proton gradient across the membrane. The alpha chain is a regulatory subunit. The chain is ATP synthase subunit alpha from Wolbachia sp. subsp. Drosophila simulans (strain wRi).